The chain runs to 314 residues: Ribosomal RNA small subunit methyltransferase H (314 aa).

S-adenosyl-L-methionine-binding positions include 58–60, Asp76, Phe103, Asp119, and Gln126; that span reads GGH.

The protein belongs to the methyltransferase superfamily. RsmH family.

The protein localises to the cytoplasm. The catalysed reaction is cytidine(1402) in 16S rRNA + S-adenosyl-L-methionine = N(4)-methylcytidine(1402) in 16S rRNA + S-adenosyl-L-homocysteine + H(+). In terms of biological role, specifically methylates the N4 position of cytidine in position 1402 (C1402) of 16S rRNA. The protein is Ribosomal RNA small subunit methyltransferase H of Gloeobacter violaceus (strain ATCC 29082 / PCC 7421).